A 619-amino-acid polypeptide reads, in one-letter code: Enolase 4 (619 aa).

A compositionally biased stretch (basic and acidic residues) spans 173–184 (DKERKELEKSQE). The disordered stretch occupies residues 173–236 (DKERKELEKS…PPEPPEPVLH (64 aa)). A compositionally biased stretch (pro residues) spans 188–206 (PAPPPVTLPPPPPPPPPPP). Glu-302 serves as a coordination point for substrate. A disordered region spans residues 333 to 354 (TLPPPKQETKKGHNGSKRAQPP). Lys-497 acts as the Proton acceptor in catalysis. A substrate-binding site is contributed by Lys-548.

Belongs to the enolase family. In terms of assembly, interacts with ENO1. Isoform 1 and isoform 4 interact with AKAP4. Post-translationally, synthesized as an approximately 70-kDa precursor, which then undergoes proteolytic cleavage to an approximately 60-kDa enzyme; HOATZ associates directly or indirectly with ENO4 to mediate this process before its transport to mature flagella. Testis-specific. Expressed in spermatids and ependyma (at protein level). In terms of tissue distribution, expressed at higher levels in late spermatids than in pachytene spermatocytes. As to expression, expressed at higher levels in pachytene spermatocytes than in late spermatids.

The catalysed reaction is (2R)-2-phosphoglycerate = phosphoenolpyruvate + H2O. It functions in the pathway carbohydrate degradation; glycolysis; pyruvate from D-glyceraldehyde 3-phosphate: step 4/5. Functionally, required for sperm motility, function and male fertility. May be involved in the normal assembly of the sperm fibrous sheath and provides most of the enolase activity in sperm. This Mus musculus (Mouse) protein is Enolase 4 (Eno4).